Consider the following 478-residue polypeptide: 7-dehydrocholesterol reductase (478 aa).

The disordered stretch occupies residues 1–28 (MMASDRVRKRHKGSANGAQTVEKEPSKE). The next 6 membrane-spanning stretches (helical) occupy residues 43 to 63 (LSGVILLLCFAPFLVSFFIMA), 97 to 117 (WAAAKIYAIWVTFQVVLYMCV), 180 to 200 (WIPLLWCTNILGYAVSTFAFI), 269 to 289 (VTNSMILVNVLQAVYVVDFFW), 309 to 329 (LGWGDCVWLPFLYTLQGLYLV), and 333 to 353 (IQLSTPHAAGVLILGLVGYYI). NADP(+) is bound by residues Lys361, Arg365, Met398, Trp403, and 410 to 411 (NY). The helical transmembrane segment at 424–444 (ACGGNHLLPYFYIIYMTILLV) threads the bilayer. NADP(+)-binding positions include Asp450, 454–458 (CSNKY), and Tyr465.

The protein belongs to the ERG4/ERG24 family.

It localises to the endoplasmic reticulum membrane. It catalyses the reaction cholesterol + NADP(+) = 7-dehydrocholesterol + NADPH + H(+). The enzyme catalyses 7-dehydrodesmosterol + NADPH + H(+) = desmosterol + NADP(+). It participates in steroid biosynthesis; cholesterol biosynthesis. In terms of biological role, catalyzes the last step of the cholesterol synthesis pathway, which transforms cholesta-5,7-dien-3beta-ol (7-dehydrocholesterol,7-DHC) into cholesterol by reducing the C7-C8 double bond of its sterol core. Can also metabolize cholesta-5,7,24-trien-3beta-ol (7-dehydrodemosterol, 7-DHD) to desmosterol, which is then metabolized by the Delta(24)-sterol reductase (DHCR24) to cholesterol. Modulates ferroptosis (a form of regulated cell death driven by iron-dependent lipid peroxidation) through the metabolic breakdown of the anti-ferroptotic metabolites 7-DHC and 7-DHD which, when accumulated, divert the propagation of peroxyl radical-mediated damage from phospholipid components to its sterol core, protecting plasma and mitochondrial membranes from phospholipid autoxidation. The protein is 7-dehydrocholesterol reductase (dhcr7) of Danio rerio (Zebrafish).